Consider the following 344-residue polypeptide: C-C chemokine receptor-like 2 (344 aa).

The Extracellular portion of the chain corresponds to 1 to 43 (MANYTLAPEDEYDVLIEGELESDEAEQCDRYDTWALSAQLVPS). An N-linked (GlcNAc...) asparagine glycan is attached at asparagine 3. A helical transmembrane segment spans residues 44–64 (LCSAVFVVGVLDNLLVVLILV). Topologically, residues 65–74 (KYKGLKRVEN) are cytoplasmic. Residues 75 to 95 (IYLLNLAVSNLCFLLTLPFWA) traverse the membrane as a helical segment. Residues 96–104 (HAGGDPMCK) lie on the Extracellular side of the membrane. Cysteine 103 and cysteine 181 form a disulfide bridge. The helical transmembrane segment at 105-125 (ILIGLYFVGLYSETFFNCLLT) threads the bilayer. The Cytoplasmic portion of the chain corresponds to 126–148 (LQRYLVFLHKGNFFSVRRRVPCG). Residues 149–169 (IVTSAVAWVTAILATVPEFAV) form a helical membrane-spanning segment. The Extracellular portion of the chain corresponds to 170–198 (YKPQMEDPKYKCAFSRTPFLPADETFWKH). The chain crosses the membrane as a helical span at residues 199–219 (FLTLKMNVSVLVFPLFIFTFL). Residues 220–238 (YVQMRKTLRFGEQRYSLFK) lie on the Cytoplasmic side of the membrane. The helical transmembrane segment at 239 to 259 (LVFAIMVVFLLMWAPYNIALF) threads the bilayer. Residues 260-281 (LSTFKEHFSLSDCKSNYNLDKS) lie on the Extracellular side of the membrane. A helical transmembrane segment spans residues 282–302 (VLITKLIATTHCCVNPLLYVF). Residues 303 to 344 (LDGTFRKYLCRFFHRRSNTPRQPRRRFAQGTSREEPDRSTEV) are Cytoplasmic-facing. Residues 323–344 (RQPRRRFAQGTSREEPDRSTEV) are disordered. The span at 334 to 344 (SREEPDRSTEV) shows a compositional bias: basic and acidic residues.

It belongs to the G-protein coupled receptor 1 family.

The protein resides in the cell membrane. Functionally, receptor for CCL19 and chemerin/RARRES2. Does not appear to be a signaling receptor, but may have a role in modulating chemokine-triggered immune responses by capturing and internalizing CCL19 or by presenting RARRES2 ligand to CMKLR1, a functional signaling receptor. Plays a critical role for the development of Th2 responses. The protein is C-C chemokine receptor-like 2 (CCRL2) of Macaca mulatta (Rhesus macaque).